A 357-amino-acid chain; its full sequence is Protein RecA (357 aa).

Position 67–74 (67–74 (GPESSGKT)) interacts with ATP. Positions 335 to 357 (LSSSASDDENSEGNVDFETGEVF) are disordered.

This sequence belongs to the RecA family.

It localises to the cytoplasm. Its function is as follows. Can catalyze the hydrolysis of ATP in the presence of single-stranded DNA, the ATP-dependent uptake of single-stranded DNA by duplex DNA, and the ATP-dependent hybridization of homologous single-stranded DNAs. It interacts with LexA causing its activation and leading to its autocatalytic cleavage. The sequence is that of Protein RecA from Shewanella sp. (strain MR-4).